The primary structure comprises 104 residues: Putative thioredoxin-4 (104 aa).

The region spanning 2 to 104 is the Thioredoxin domain; the sequence is SKVTNVSINT…QLRKILDSMK (103 aa). Catalysis depends on nucleophile residues cysteine 31 and cysteine 34. Cysteine 31 and cysteine 34 form a disulfide bridge.

It belongs to the thioredoxin family.

Its function is as follows. Participates in various redox reactions through the reversible oxidation of its active center dithiol to a disulfide and catalyzes dithiol-disulfide exchange reactions. The polypeptide is Putative thioredoxin-4 (trxD) (Dictyostelium discoideum (Social amoeba)).